Consider the following 430-residue polypeptide: Adenylosuccinate synthetase (430 aa).

GTP-binding positions include glycine 12–lysine 18 and glycine 40–threonine 42. The Proton acceptor role is filled by aspartate 13. Positions 13 and 40 each coordinate Mg(2+). IMP-binding positions include aspartate 13–lysine 16, asparagine 38–histidine 41, threonine 130, arginine 144, glutamine 224, threonine 239, and arginine 303. The active-site Proton donor is histidine 41. Threonine 299–arginine 305 serves as a coordination point for substrate. GTP-binding positions include arginine 305, lysine 331 to aspartate 333, and serine 413 to serine 415.

It belongs to the adenylosuccinate synthetase family. In terms of assembly, homodimer. Requires Mg(2+) as cofactor.

It localises to the cytoplasm. It carries out the reaction IMP + L-aspartate + GTP = N(6)-(1,2-dicarboxyethyl)-AMP + GDP + phosphate + 2 H(+). It participates in purine metabolism; AMP biosynthesis via de novo pathway; AMP from IMP: step 1/2. Plays an important role in the de novo pathway of purine nucleotide biosynthesis. Catalyzes the first committed step in the biosynthesis of AMP from IMP. The chain is Adenylosuccinate synthetase from Cereibacter sphaeroides (strain KD131 / KCTC 12085) (Rhodobacter sphaeroides).